Consider the following 447-residue polypeptide: Clusterin (447 aa).

The N-terminal stretch at 1–22 (MKTLLLCVGLLLSWERGQVLGD) is a signal peptide. Positions 77–80 (KKNK) match the Nuclear localization signal motif. Asn-85 and Asn-102 each carry an N-linked (GlcNAc...) asparagine glycan. Cystine bridges form between Cys-101–Cys-311, Cys-112–Cys-303, Cys-115–Cys-300, Cys-120–Cys-293, and Cys-128–Cys-283. Ser-132 carries the post-translational modification Phosphoserine. 5 N-linked (GlcNAc...) asparagine glycosylation sites follow: Asn-144, Asn-289, Asn-326, Asn-352, and Asn-372. Ser-394 carries the phosphoserine modification. Positions 441 to 445 (RKKKR) match the Nuclear localization signal motif.

Belongs to the clusterin family. Antiparallel disulfide-linked heterodimer of an alpha chain and a beta chain. Self-associates and forms higher oligomers. Interacts with a broad range of misfolded proteins, including APP, APOC2 and LYZ. Slightly acidic pH promotes interaction with misfolded proteins. Forms high-molecular weight oligomers upon interaction with misfolded proteins. Interacts with APOA1, LRP2, CLUAP1 and PON1. Interacts with the complement membrane attack complex. Interacts (via alpha chain) with XRCC6. Interacts with SYVN1, COMMD1, BTRC, CUL1 and with ubiquitin and SCF (SKP1-CUL1-F-box protein) E3 ubiquitin-protein ligase complexes. Interacts (via alpha chain) with BAX in stressed cells, where BAX undergoes a conformation change leading to association with the mitochondrial membrane. Does not interact with BAX in unstressed cells. Found in a complex with LTF, CLU, EPPIN and SEMG1. Interacts (immaturely glycosylated pre-secreted form) with HSPA5; this interaction promotes CLU stability and facilitates stress-induced CLU retrotranslocation from the secretory pathway to the mitochondria, thereby reducing stress-induced apoptosis by stabilizing mitochondrial membrane integrity. Interacts with BCL2L1; this interaction releases and activates BAX and promotes cell death. Interacts with TGFBR2 and ACVR1. Interacts (secreted form) with STMN3; this interaction may act as an important modulator during neuronal differentiation. Interacts with VLDLR and LRP8. Post-translationally, proteolytically cleaved on its way through the secretory system, probably within the Golgi lumen. Proteolytic cleavage is not necessary for its chaperone activity. All non-secreted forms are not proteolytically cleaved. Chaperone activity of uncleaved forms is dependent on a non-reducing environment. Polyubiquitinated, leading to proteasomal degradation. Under cellular stress, the intracellular level of cleaved form is reduced due to proteasomal degradation. In terms of processing, heavily N-glycosylated. About 30% of the protein mass is comprised of complex N-linked carbohydrate. Endoplasmic reticulum (ER) stress induces changes in glycosylation status and increases level of hypoglycosylated forms. Core carbohydrates are essential for chaperone activity. Non-secreted forms are hypoglycosylated or unglycosylated.

It is found in the secreted. Its subcellular location is the nucleus. The protein resides in the cytoplasm. It localises to the mitochondrion membrane. The protein localises to the cytosol. It is found in the microsome. Its subcellular location is the endoplasmic reticulum. The protein resides in the mitochondrion. It localises to the perinuclear region. The protein localises to the cytoplasmic vesicle. It is found in the secretory vesicle. Its subcellular location is the chromaffin granule. Functionally, functions as extracellular chaperone that prevents aggregation of non native proteins. Prevents stress-induced aggregation of blood plasma proteins. Inhibits formation of amyloid fibrils by APP, APOC2, B2M, CALCA, CSN3, SNCA and aggregation-prone LYZ variants (in vitro). Does not require ATP. Maintains partially unfolded proteins in a state appropriate for subsequent refolding by other chaperones, such as HSPA8/HSC70. Does not refold proteins by itself. Binding to cell surface receptors triggers internalization of the chaperone-client complex and subsequent lysosomal or proteasomal degradation. When secreted, protects cells against apoptosis and against cytolysis by complement: inhibits assembly of the complement membrane attack complex (MAC) by preventing polymerization of C9 pore component of the MAC complex. Intracellular forms interact with ubiquitin and SCF (SKP1-CUL1-F-box protein) E3 ubiquitin-protein ligase complexes and promote the ubiquitination and subsequent proteasomal degradation of target proteins. Promotes proteasomal degradation of COMMD1 and IKBKB. Modulates NF-kappa-B transcriptional activity. Following stress, promotes apoptosis. Inhibits apoptosis when associated with the mitochondrial membrane by interference with BAX-dependent release of cytochrome c into the cytoplasm. Plays a role in the regulation of cell proliferation. An intracellular form suppresses stress-induced apoptosis by stabilizing mitochondrial membrane integrity through interaction with HSPA5. Secreted form does not affect caspase or BAX-mediated intrinsic apoptosis and TNF-induced NF-kappa-B-activity. Secreted form act as an important modulator during neuronal differentiation through interaction with STMN3. Plays a role in the clearance of immune complexes that arise during cell injury. The polypeptide is Clusterin (CLU) (Oryctolagus cuniculus (Rabbit)).